Consider the following 340-residue polypeptide: Ketol-acid reductoisomerase (NADP(+)) (340 aa).

Positions 3 to 183 (LPIYYDKDCD…GGGRTGIIHT (181 aa)) constitute a KARI N-terminal Rossmann domain. NADP(+) contacts are provided by residues 26 to 29 (FGSQ), S54, and 84 to 87 (DEIQ). The active site involves H109. G135 serves as a coordination point for NADP(+). A KARI C-terminal knotted domain is found at 184 to 329 (TFKDETETDL…KRLRAMMPWI (146 aa)). 4 residues coordinate Mg(2+): D192, E196, E228, and E232. Residue S253 participates in substrate binding.

Belongs to the ketol-acid reductoisomerase family. Mg(2+) serves as cofactor.

It carries out the reaction (2R)-2,3-dihydroxy-3-methylbutanoate + NADP(+) = (2S)-2-acetolactate + NADPH + H(+). The catalysed reaction is (2R,3R)-2,3-dihydroxy-3-methylpentanoate + NADP(+) = (S)-2-ethyl-2-hydroxy-3-oxobutanoate + NADPH + H(+). Its pathway is amino-acid biosynthesis; L-isoleucine biosynthesis; L-isoleucine from 2-oxobutanoate: step 2/4. It functions in the pathway amino-acid biosynthesis; L-valine biosynthesis; L-valine from pyruvate: step 2/4. In terms of biological role, involved in the biosynthesis of branched-chain amino acids (BCAA). Catalyzes an alkyl-migration followed by a ketol-acid reduction of (S)-2-acetolactate (S2AL) to yield (R)-2,3-dihydroxy-isovalerate. In the isomerase reaction, S2AL is rearranged via a Mg-dependent methyl migration to produce 3-hydroxy-3-methyl-2-ketobutyrate (HMKB). In the reductase reaction, this 2-ketoacid undergoes a metal-dependent reduction by NADPH to yield (R)-2,3-dihydroxy-isovalerate. This chain is Ketol-acid reductoisomerase (NADP(+)), found in Nitratiruptor sp. (strain SB155-2).